Here is a 233-residue protein sequence, read N- to C-terminus: Ribonuclease 3 (233 aa).

One can recognise an RNase III domain in the interval 8 to 135; it reads AQRFLEDKQL…VIGAIYLDQG (128 aa). Position 48 (Glu-48) interacts with Mg(2+). Asp-52 is an active-site residue. Asp-121 and Glu-124 together coordinate Mg(2+). Residue Glu-124 is part of the active site. The DRBM domain maps to 161–230; it reads DYKSKLQELV…AQKVLQDNLV (70 aa).

It belongs to the ribonuclease III family. In terms of assembly, homodimer. It depends on Mg(2+) as a cofactor.

Its subcellular location is the cytoplasm. It catalyses the reaction Endonucleolytic cleavage to 5'-phosphomonoester.. In terms of biological role, digests double-stranded RNA. Involved in the processing of primary rRNA transcript to yield the immediate precursors to the large and small rRNAs (23S and 16S). Processes some mRNAs, and tRNAs when they are encoded in the rRNA operon. Processes pre-crRNA and tracrRNA of type II CRISPR loci if present in the organism. The chain is Ribonuclease 3 from Syntrophomonas wolfei subsp. wolfei (strain DSM 2245B / Goettingen).